The chain runs to 58 residues: MNRILGMIFLFCLISCYAVDIIQSAKSNGCSVELVKRCQERKCASPCCRDGECHCGCK.

A signal peptide spans 1–18; sequence MNRILGMIFLFCLISCYA.

It belongs to the scoloptoxin-14 family. Contains 4 disulfide bonds. As to expression, expressed by the venom gland.

Its subcellular location is the secreted. The sequence is that of U-scoloptoxin(14)-Sa1a from Scolopendra alternans (Florida Keys giant centipede).